The following is a 210-amino-acid chain: 3-hydroxy-3-methylglutaryl-coenzyme A reductase 2 (210 aa).

Active-site charge relay system residues include K21 and D97. The helical transmembrane segment at 166–186 (LLATIVAGSVLAGELSLMSAI) threads the bilayer. Catalysis depends on H195, which acts as the Proton donor. A glycan (N-linked (GlcNAc...) asparagine) is linked at N199.

Belongs to the HMG-CoA reductase family.

The protein resides in the endoplasmic reticulum membrane. It is found in the mitochondrion membrane. It localises to the plastid membrane. It catalyses the reaction (R)-mevalonate + 2 NADP(+) + CoA = (3S)-3-hydroxy-3-methylglutaryl-CoA + 2 NADPH + 2 H(+). Its pathway is metabolic intermediate biosynthesis; (R)-mevalonate biosynthesis; (R)-mevalonate from acetyl-CoA: step 3/3. In terms of biological role, catalyzes the synthesis of mevalonate. The specific precursor of all isoprenoid compounds present in plants. The protein is 3-hydroxy-3-methylglutaryl-coenzyme A reductase 2 (HMGR2) of Hevea brasiliensis (Para rubber tree).